Reading from the N-terminus, the 408-residue chain is Protein SLX4IP (408 aa).

Glycyl lysine isopeptide (Lys-Gly) (interchain with G-Cter in SUMO2) cross-links involve residues K61 and K79. The residue at position 130 (S130) is a Phosphoserine. Residues K167 and K176 each participate in a glycyl lysine isopeptide (Lys-Gly) (interchain with G-Cter in SUMO2) cross-link. The interval 173 to 226 (TETKSSVTSKSQTRRDTVETSSDSVIAEIARRRNDGQASSSPPSESMGQAKDSI) is disordered. Over residues 208 to 219 (GQASSSPPSESM) the composition is skewed to polar residues. At S213 the chain carries Phosphoserine. Residues K239 and K242 each participate in a glycyl lysine isopeptide (Lys-Gly) (interchain with G-Cter in SUMO2) cross-link. Residues 243 to 255 (VNQTQPEDTSGQQ) are compositionally biased toward polar residues. The segment at 243–313 (VNQTQPEDTS…DFDHHGRVSL (71 aa)) is disordered. Glycyl lysine isopeptide (Lys-Gly) (interchain with G-Cter in SUMO2) cross-links involve residues K256, K291, K347, K356, and K372. Residues 365–408 (LSSRHLMKNNPGQAQQTGLATNTERLSTIQNSPTKKRKKYERGH) form a disordered region. Residues 374–397 (NPGQAQQTGLATNTERLSTIQNSP) show a composition bias toward polar residues. T392 is modified (phosphothreonine). Residues 398 to 408 (TKKRKKYERGH) are compositionally biased toward basic residues. K399 participates in a covalent cross-link: Glycyl lysine isopeptide (Lys-Gly) (interchain with G-Cter in SUMO2).

The protein belongs to the SLX4IP family. Interacts with SLX4/BTBD12; subunit of different structure-specific endonucleases.

This Homo sapiens (Human) protein is Protein SLX4IP (SLX4IP).